The primary structure comprises 631 residues: Fusexin 1 (631 aa).

The first 19 residues, 1 to 19, serve as a signal peptide directing secretion; sequence MRRAALILAFVLFIGLSSA. The tract at residues 20-90 is domain I N-terminus; that stretch reads TVTSADSITY…THQDSKLKYS (71 aa). The Extracellular portion of the chain corresponds to 20 to 537; it reads TVTSADSITY…NLFGGSGSGD (518 aa). A domain II N-terminus region spans residues 91 to 170; that stretch reads TSTSDELRDI…KLATPAYIDN (80 aa). Residues aspartate 112, serine 146, tyrosine 149, and aspartate 150 each coordinate Ca(2+). Cysteines 125 and 155 form a disulfide. Residues 143–148 form a fusion loop, required for fusogenic activity, not required for membrane surface localization region; it reads SVTSPV. Positions 171-224 are domain I central section; that stretch reads PDEIFTAKAELQAGDKTIQSATLSNGDAGDGTVTDLGDSKISWNGNLDLGASEP. The segment at 225-316 is domain II C-terminus; sequence ENSRVIALYS…KDSSLDTGSF (92 aa). The segment at 317–348 is domain I C-terminus; sequence VYDTPELLSYPSFTVYVDAGENGYIEVTKPTG. Residues 349 to 455 are domain III; it reads DPDIISTSST…SVSVTGIQQS (107 aa). Disulfide bonds link cysteine 389–cysteine 432, cysteine 457–cysteine 477, and cysteine 490–cysteine 506. The interval 443–467 is disordered; sequence DSTSVSVTGIQQSECNPGDQRREKN. The segment at 456 to 509 is domain IV, required for fusogenic activity; the sequence is ECNPGDQRREKNENDRWEIYTCQDNGLTYEYDVTCAEDEKAVAQGDNQFSCEKQ. The interval 510–537 is stem; the sequence is DDDSGGGDNTGSDSGLFSNLFGGSGSGD. A helical membrane pass occupies residues 538-558; the sequence is LLTQVHTALSILAGLVAGFFG. Residues 559–590 lie on the Cytoplasmic side of the membrane; sequence YRGARWIHGETDIKGGFKLESRNVSRVKRGSP. Residues 591–611 form a helical membrane-spanning segment; the sequence is VAGIVGAVLGFVVGYGVASVF. Residue histidine 612 is a topological domain, extracellular. A helical membrane pass occupies residues 613 to 630; that stretch reads PVVQIIVVLGIAVGLYYF. Residue arginine 631 is a topological domain, cytoplasmic.

This sequence belongs to the HAP2/GCS1 family. Fusexin 1 subfamily. As to quaternary structure, monomer in solution, crystallizes as a trimer in high salt (2.5 M NaCl, 0.2 M CaCl(2)). The trimer is stabilized by interdomain contacts and numerous Ca(2+) and Na(+) ions.

It is found in the cell surface. The protein resides in the cell membrane. Functionally, exhibits fusogenic activity. Mediates cell-cell fusion in mammalian cells when present in both cells (bilateral fusion). This is Fusexin 1 from Uncultured archaeon.